A 239-amino-acid polypeptide reads, in one-letter code: Large ribosomal subunit protein uL1 (239 aa).

The protein belongs to the universal ribosomal protein uL1 family. Part of the 50S ribosomal subunit.

Binds directly to 23S rRNA. The L1 stalk is quite mobile in the ribosome, and is involved in E site tRNA release. In terms of biological role, protein L1 is also a translational repressor protein, it controls the translation of the L11 operon by binding to its mRNA. The chain is Large ribosomal subunit protein uL1 from Rickettsia africae (strain ESF-5).